The sequence spans 497 residues: uncharacterized protein (497 aa).

Residues Asp-12, Thr-13, and Cys-52 each contribute to the Ca(2+) site. Cys-52 acts as the Nucleophile in catalysis. Cys-52 is modified (3-oxoalanine (Cys)). His-102 is an active-site residue. Positions 284 and 285 each coordinate Ca(2+).

The protein belongs to the sulfatase family. The cofactor is Ca(2+). Post-translationally, the conversion to 3-oxoalanine (also known as C-formylglycine, FGly), of a serine or cysteine residue in prokaryotes and of a cysteine residue in eukaryotes, is critical for catalytic activity.

This is an uncharacterized protein from Escherichia coli (strain K12).